Reading from the N-terminus, the 118-residue chain is Large ribosomal subunit protein uL22 (118 aa).

It belongs to the universal ribosomal protein uL22 family. Part of the 50S ribosomal subunit.

This protein binds specifically to 23S rRNA; its binding is stimulated by other ribosomal proteins, e.g. L4, L17, and L20. It is important during the early stages of 50S assembly. It makes multiple contacts with different domains of the 23S rRNA in the assembled 50S subunit and ribosome. In terms of biological role, the globular domain of the protein is located near the polypeptide exit tunnel on the outside of the subunit, while an extended beta-hairpin is found that lines the wall of the exit tunnel in the center of the 70S ribosome. The protein is Large ribosomal subunit protein uL22 of Prosthecochloris aestuarii (strain DSM 271 / SK 413).